The following is a 256-amino-acid chain: Phosphonates import ATP-binding protein PhnC (256 aa).

The ABC transporter domain occupies 3 to 247 (LELKNISKTY…VLHKEIFTNV (245 aa)). Residue 36–43 (GLSGAGKS) coordinates ATP.

This sequence belongs to the ABC transporter superfamily. Phosphonates importer (TC 3.A.1.9.1) family. In terms of assembly, the complex is composed of two ATP-binding proteins (PhnC), two transmembrane proteins (PhnE) and a solute-binding protein (PhnD).

The protein localises to the cell inner membrane. It catalyses the reaction phosphonate(out) + ATP + H2O = phosphonate(in) + ADP + phosphate + H(+). Functionally, part of the ABC transporter complex PhnCDE involved in phosphonates import. Responsible for energy coupling to the transport system. The protein is Phosphonates import ATP-binding protein PhnC of Treponema denticola (strain ATCC 35405 / DSM 14222 / CIP 103919 / JCM 8153 / KCTC 15104).